Here is a 425-residue protein sequence, read N- to C-terminus: Histidine--tRNA ligase (425 aa).

It belongs to the class-II aminoacyl-tRNA synthetase family. In terms of assembly, homodimer.

Its subcellular location is the cytoplasm. The catalysed reaction is tRNA(His) + L-histidine + ATP = L-histidyl-tRNA(His) + AMP + diphosphate + H(+). This is Histidine--tRNA ligase from Shewanella oneidensis (strain ATCC 700550 / JCM 31522 / CIP 106686 / LMG 19005 / NCIMB 14063 / MR-1).